The chain runs to 435 residues: Antho-RFamide neuropeptides type 1 (435 aa).

An N-terminal signal peptide occupies residues 1–22 (MTTVSYVTILLTVLVQVLTSDA). A propeptide spanning residues 23–193 (KATNNKRELS…SVPGRYGREL (171 aa)) is cleaved from the precursor. At Gln-194 the chain carries Pyrrolidone carboxylic acid. The residue at position 197 (Phe-197) is a Phenylalanine amide. The propeptide occupies 199 to 201 (REL). Phenylalanine amide is present on Phe-205. Residues 207 to 209 (REA) constitute a propeptide that is removed on maturation. Phe-213 carries the phenylalanine amide modification. Residues 215–217 (REL) constitute a propeptide that is removed on maturation. At Phe-221 the chain carries Phenylalanine amide. The propeptide occupies 223–225 (REF). Phe-229 is subject to Phenylalanine amide. Over residues 230–371 (GREDQGRFGR…EDIAEADQGR (142 aa)) the composition is skewed to basic and acidic residues. 2 disordered regions span residues 230–374 (GRED…RFGR) and 386–435 (AKKR…AKTS). Positions 231-233 (RED) are excised as a propeptide. Phe-237 carries the post-translational modification Phenylalanine amide. The propeptide occupies 239–241 (RED). A Phenylalanine amide modification is found at Phe-245. Residues 247-249 (RED) constitute a propeptide that is removed on maturation. Phe-253 is modified (phenylalanine amide). A propeptide spanning residues 255 to 257 (RED) is cleaved from the precursor. The residue at position 261 (Phe-261) is a Phenylalanine amide. Positions 263-265 (RED) are excised as a propeptide. Phe-269 carries the post-translational modification Phenylalanine amide. Positions 271–273 (RED) are excised as a propeptide. Position 277 is a phenylalanine amide (Phe-277). Residues 279–281 (REL) constitute a propeptide that is removed on maturation. Phe-285 is modified (phenylalanine amide). A propeptide spanning residues 287 to 289 (REF) is cleaved from the precursor. Phe-293 bears the Phenylalanine amide mark. A propeptide spanning residues 295-297 (RED) is cleaved from the precursor. Residue Phe-301 is modified to Phenylalanine amide. A propeptide spanning residues 303–305 (RED) is cleaved from the precursor. Phe-309 carries the post-translational modification Phenylalanine amide. Residues 311 to 313 (REL) constitute a propeptide that is removed on maturation. A Phenylalanine amide modification is found at Phe-317. Positions 319–321 (RED) are excised as a propeptide. Phenylalanine amide is present on Phe-325. Positions 327 to 329 (RED) are excised as a propeptide. Phe-333 is subject to Phenylalanine amide. The propeptide occupies 335 to 342 (REDLAKED). Phenylalanine amide is present on Phe-346. A propeptide spanning residues 348-355 (REDLAKED) is cleaved from the precursor. The residue at position 359 (Phe-359) is a Phenylalanine amide. Residues 361–368 (REDIAEAD) constitute a propeptide that is removed on maturation. The residue at position 372 (Phe-372) is a Phenylalanine amide. The propeptide occupies 374 to 435 (RNAAAAAAAA…KSDDALAKTS (62 aa)). Residues 398–435 (SDPKPQTRFRDGKDMQEKRKVEKKDKIEKSDDALAKTS) show a composition bias toward basic and acidic residues.

The protein belongs to the FARP (FMRFamide related peptide) family.

Its subcellular location is the secreted. Not known but it could act as a transmitter at neuromuscular synapses. In Anthopleura elegantissima (Green aggregating anemone), this protein is Antho-RFamide neuropeptides type 1.